We begin with the raw amino-acid sequence, 757 residues long: Elongation factor G, mitochondrial (757 aa).

The N-terminal 39 residues, Met1–Arg39, are a transit peptide targeting the mitochondrion. Positions Gln65–Ser346 constitute a tr-type G domain. Residues Ala74–Thr81, Asp145–His149, and Asn199–Asp202 each bind GTP.

Belongs to the TRAFAC class translation factor GTPase superfamily. Classic translation factor GTPase family. EF-G/EF-2 subfamily.

The protein localises to the mitochondrion. Its pathway is protein biosynthesis; polypeptide chain elongation. Functionally, mitochondrial GTPase that catalyzes the GTP-dependent ribosomal translocation step during translation elongation. During this step, the ribosome changes from the pre-translocational (PRE) to the post-translocational (POST) state as the newly formed A-site-bound peptidyl-tRNA and P-site-bound deacylated tRNA move to the P and E sites, respectively. Catalyzes the coordinated movement of the two tRNA molecules, the mRNA and conformational changes in the ribosome. This chain is Elongation factor G, mitochondrial, found in Candida glabrata (strain ATCC 2001 / BCRC 20586 / JCM 3761 / NBRC 0622 / NRRL Y-65 / CBS 138) (Yeast).